The primary structure comprises 427 residues: UDP-N-acetylglucosamine--N-acetylmuramyl-(pentapeptide) pyrophosphoryl-undecaprenol N-acetylglucosamine transferase (427 aa).

UDP-N-acetyl-alpha-D-glucosamine-binding positions include 29–31 (TGG), Asn-141, Arg-177, Ser-205, Ile-258, and Gln-303. Positions 408-427 (SLHPIPDSRFPIRTSAGGAQ) are disordered.

This sequence belongs to the glycosyltransferase 28 family. MurG subfamily.

Its subcellular location is the cell inner membrane. It catalyses the reaction di-trans,octa-cis-undecaprenyl diphospho-N-acetyl-alpha-D-muramoyl-L-alanyl-D-glutamyl-meso-2,6-diaminopimeloyl-D-alanyl-D-alanine + UDP-N-acetyl-alpha-D-glucosamine = di-trans,octa-cis-undecaprenyl diphospho-[N-acetyl-alpha-D-glucosaminyl-(1-&gt;4)]-N-acetyl-alpha-D-muramoyl-L-alanyl-D-glutamyl-meso-2,6-diaminopimeloyl-D-alanyl-D-alanine + UDP + H(+). It participates in cell wall biogenesis; peptidoglycan biosynthesis. In terms of biological role, cell wall formation. Catalyzes the transfer of a GlcNAc subunit on undecaprenyl-pyrophosphoryl-MurNAc-pentapeptide (lipid intermediate I) to form undecaprenyl-pyrophosphoryl-MurNAc-(pentapeptide)GlcNAc (lipid intermediate II). The polypeptide is UDP-N-acetylglucosamine--N-acetylmuramyl-(pentapeptide) pyrophosphoryl-undecaprenol N-acetylglucosamine transferase (Xanthomonas campestris pv. campestris (strain 8004)).